Reading from the N-terminus, the 538-residue chain is Bifunctional purine biosynthesis protein PurH (538 aa).

Residues 6 to 158 enclose the MGS-like domain; the sequence is KHIPAPDLHR…KNHAYVATVV (153 aa).

The protein belongs to the PurH family.

It carries out the reaction (6R)-10-formyltetrahydrofolate + 5-amino-1-(5-phospho-beta-D-ribosyl)imidazole-4-carboxamide = 5-formamido-1-(5-phospho-D-ribosyl)imidazole-4-carboxamide + (6S)-5,6,7,8-tetrahydrofolate. The enzyme catalyses IMP + H2O = 5-formamido-1-(5-phospho-D-ribosyl)imidazole-4-carboxamide. Its pathway is purine metabolism; IMP biosynthesis via de novo pathway; 5-formamido-1-(5-phospho-D-ribosyl)imidazole-4-carboxamide from 5-amino-1-(5-phospho-D-ribosyl)imidazole-4-carboxamide (10-formyl THF route): step 1/1. It participates in purine metabolism; IMP biosynthesis via de novo pathway; IMP from 5-formamido-1-(5-phospho-D-ribosyl)imidazole-4-carboxamide: step 1/1. This Brucella abortus (strain S19) protein is Bifunctional purine biosynthesis protein PurH.